Here is a 277-residue protein sequence, read N- to C-terminus: F-actin-capping protein subunit beta isoforms 1 and 2 (277 aa).

S2 carries the post-translational modification N-acetylserine.

This sequence belongs to the F-actin-capping protein beta subunit family. As to quaternary structure, component of the F-actin capping complex, composed of a heterodimer of an alpha and a beta subunit. Component of the WASH complex. In terms of assembly, component of the F-actin capping complex, composed of a heterodimer of an alpha and a beta subunit. Subunit of dynactin, a multiprotein complex part of a tripartite complex with dynein and a adapter, such as BICDL1, BICD2 or HOOK3. The dynactin complex is built around ACTR1A/ACTB filament and consists of an actin-related filament composed of a shoulder domain, a pointed end and a barbed end. Its length is defined by its flexible shoulder domain. As to expression, isoform 1 is detected in pectoral muscle, cardiac muscle and gizzard. Isoform 2 is detected in brain and liver (at protein level). Isoform 2 is the predominant isoform of nonmuscle tissues and isoform 1 is the predominant isoform of muscle tissues.

The protein localises to the cytoplasm. It localises to the myofibril. Its subcellular location is the sarcomere. It is found in the z line. The protein resides in the i band. The protein localises to the cytoskeleton. F-actin-capping proteins bind in a Ca(2+)-independent manner to the fast growing ends of actin filaments (barbed end) thereby blocking the exchange of subunits at these ends. Unlike other capping proteins (such as gelsolin and severin), these proteins do not sever actin filaments. May play a role in the regulation of cell morphology and cytoskeletal organization. In terms of biological role, forms, with CAPZB, the barbed end of the fast growing ends of actin filaments in the dynactin complex and stabilizes dynactin structure. The dynactin multiprotein complex activates the molecular motor dynein for ultra-processive transport along microtubules. The protein is F-actin-capping protein subunit beta isoforms 1 and 2 (CAPZB) of Gallus gallus (Chicken).